A 1043-amino-acid chain; its full sequence is Polycomb protein Pcl (1043 aa).

4 disordered regions span residues 1–34, 271–302, 317–346, and 395–422; these read MMNNHFHLQHDHPPQNVAHPFMQQPSTAVPSAPP, PDSTTTTPQTPPTTPEAMSSPGKSSPSPPLLA, FKTVEAAPPTPPTPPSPPPPPPAPPVAAPS, and KLRKLGGGSSITAGGGGASTTESTNTSP. Over residues 25-34 the composition is skewed to low complexity; the sequence is PSTAVPSAPP. Positions 324–344 are enriched in pro residues; it reads PPTPPTPPSPPPPPPAPPVAA. One can recognise a Tudor domain in the interval 349 to 404; it reads VTYALQEDVFIKCNDGRFYLGTIIDQTSDQYLIRFDDQSEQWCEPDKLRKLGGGSS. Gly residues predominate over residues 399–412; the sequence is LGGGSSITAGGGGA. PHD-type zinc fingers lie at residues 424-472 and 512-560; these read GPMC…CAKP and QIYC…VFCC. Residues 737 to 757 show a composition bias toward basic and acidic residues; that stretch reads AKKQAAQKADKHDELPLKPDL. Disordered stretches follow at residues 737 to 819 and 931 to 985; these read AKKQ…TSSL and AKDL…PGHS. Residues 783–792 show a composition bias toward basic residues; that stretch reads SRKRKAFRLS. Over residues 793-804 the composition is skewed to basic and acidic residues; it reads KRYDNSRNHCDL. Residues Ser805 and Ser806 each carry the phosphoserine modification. Positions 807-819 are enriched in low complexity; that stretch reads DENSSSSRGTSSL. Positions 945–954 are enriched in basic residues; it reads THGRLLRQRP. Residues 955–977 show a composition bias toward low complexity; the sequence is QKQSPSQSRRNSTSSTATSSSSN.

Belongs to the Polycomblike family. As to quaternary structure, component of a form of the Esc/E(z) complex present specifically during early embryogenesis which is composed of Caf1-55, esc, E(z), Su(z)12, Pcl and HDAC1/Rpd3. This complex is distinct from the PRC1 complex, which contains many other PcG proteins like Pc, Ph, Psc, Su(z)2. The two complexes however cooperate and interact together during the first 3 hours of development to establish PcG silencing. Interacts with corto in vitro.

It is found in the nucleus. It localises to the chromosome. Polycomb group (PcG) protein. While PcG proteins are generally required to maintain the transcriptionally repressive state of homeotic genes throughout development, this protein is specifically required during the first 6 hours of embryogenesis to establish the repressed state. Component of the Esc/E(z) complex, which methylates 'Lys-9' and 'Lys-27' residues of histone H3, leading to transcriptional repression of the affected target gene. The Esc/E(z) complex is necessary but not sufficient for the repression of homeotic target genes, suggesting that the recruitment of the distinct PRC1 complex is also required. Required for the correct spatial expression of the homeotic genes of the Antennapedia and Bithorax complexes. The protein is Polycomb protein Pcl (Pcl) of Drosophila melanogaster (Fruit fly).